Reading from the N-terminus, the 398-residue chain is Enoyl-[acyl-carrier-protein] reductase [NADH] (398 aa).

Residues 48–53 (GASTGY), 74–75 (FE), 111–112 (DG), and 139–140 (LA) each bind NAD(+). Tyr-225 contributes to the substrate binding site. Tyr-235 (proton donor) is an active-site residue. Residues Lys-244 and 273–275 (VVT) each bind NAD(+).

Belongs to the TER reductase family. Monomer.

The catalysed reaction is a 2,3-saturated acyl-[ACP] + NAD(+) = a (2E)-enoyl-[ACP] + NADH + H(+). Its pathway is lipid metabolism; fatty acid biosynthesis. Involved in the final reduction of the elongation cycle of fatty acid synthesis (FAS II). Catalyzes the reduction of a carbon-carbon double bond in an enoyl moiety that is covalently linked to an acyl carrier protein (ACP). The sequence is that of Enoyl-[acyl-carrier-protein] reductase [NADH] from Variovorax paradoxus (strain S110).